Consider the following 407-residue polypeptide: Nicotinate phosphoribosyltransferase (407 aa).

Phosphohistidine; by autocatalysis is present on H228.

It belongs to the NAPRTase family. Post-translationally, transiently phosphorylated on a His residue during the reaction cycle. Phosphorylation strongly increases the affinity for substrates and increases the rate of nicotinate D-ribonucleotide production. Dephosphorylation regenerates the low-affinity form of the enzyme, leading to product release.

It carries out the reaction nicotinate + 5-phospho-alpha-D-ribose 1-diphosphate + ATP + H2O = nicotinate beta-D-ribonucleotide + ADP + phosphate + diphosphate. It functions in the pathway cofactor biosynthesis; NAD(+) biosynthesis; nicotinate D-ribonucleotide from nicotinate: step 1/1. With respect to regulation, 100-fold more active in the presence of saturating ATP. Catalyzes the synthesis of beta-nicotinate D-ribonucleotide from nicotinate and 5-phospho-D-ribose 1-phosphate at the expense of ATP. Functions in the deamidating salvage pathway for production of NAD from nicotinamide. Displays a strict preference for nicotinate over nicotinamide substrate. In Acinetobacter baylyi (strain ATCC 33305 / BD413 / ADP1), this protein is Nicotinate phosphoribosyltransferase.